Here is an 800-residue protein sequence, read N- to C-terminus: Serine/threonine-protein kinase KIN4 (800 aa).

The 268-residue stretch at 46–313 (YIIGSTLGEG…LQTIKRHVWL (268 aa)) folds into the Protein kinase domain. ATP is bound by residues 52-60 (LGEGEFGKV) and lysine 80. Aspartate 175 acts as the Proton acceptor in catalysis. Disordered stretches follow at residues 331 to 397 (LQKE…GSKV) and 438 to 487 (SARH…TSFT). Residues 348–358 (STYSSSASSYS) show a composition bias toward low complexity. Phosphoserine occurs at positions 365 and 388. Composition is skewed to polar residues over residues 380-395 (QLAT…STGS) and 459-473 (GSPT…PSSK). A Phosphoserine modification is found at serine 521. 2 disordered regions span residues 629-661 (EPTN…DKDS) and 678-754 (SLNG…PGRS). The span at 678–721 (SLNGSRSTVESRTSKGNAPPVSSRNPSGQSNRSNIKITQQQPRN) shows a compositional bias: polar residues. Residues 727–740 (PNPDKKINDNRIRD) show a composition bias toward basic and acidic residues. Serine 748 carries the phosphoserine modification.

Belongs to the protein kinase superfamily. Ser/Thr protein kinase family.

It catalyses the reaction L-seryl-[protein] + ATP = O-phospho-L-seryl-[protein] + ADP + H(+). The catalysed reaction is L-threonyl-[protein] + ATP = O-phospho-L-threonyl-[protein] + ADP + H(+). Its function is as follows. This protein is probably a serine/threonine protein kinase. The protein is Serine/threonine-protein kinase KIN4 (KIN4) of Saccharomyces cerevisiae (strain ATCC 204508 / S288c) (Baker's yeast).